The primary structure comprises 390 residues: Mannitol-1-phosphate 5-dehydrogenase (390 aa).

Ala-7 to Gly-18 serves as a coordination point for NAD(+). Residue Lys-216 is part of the active site.

Belongs to the mannitol dehydrogenase family. In terms of assembly, monomer.

The enzyme catalyses D-mannitol 1-phosphate + NAD(+) = beta-D-fructose 6-phosphate + NADH + H(+). In terms of biological role, catalyzes the NAD(H)-dependent interconversion of D-fructose 6-phosphate and D-mannitol 1-phosphate in the mannitol metabolic pathway. Has a strong preference for NADH over NADPH. The chain is Mannitol-1-phosphate 5-dehydrogenase from Alternaria alternata (Alternaria rot fungus).